A 122-amino-acid polypeptide reads, in one-letter code: Large ribosomal subunit protein uL14 (122 aa).

This sequence belongs to the universal ribosomal protein uL14 family. Part of the 50S ribosomal subunit. Forms a cluster with proteins L3 and L19. In the 70S ribosome, L14 and L19 interact and together make contacts with the 16S rRNA in bridges B5 and B8.

In terms of biological role, binds to 23S rRNA. Forms part of two intersubunit bridges in the 70S ribosome. The polypeptide is Large ribosomal subunit protein uL14 (Nitrosomonas europaea (strain ATCC 19718 / CIP 103999 / KCTC 2705 / NBRC 14298)).